Reading from the N-terminus, the 448-residue chain is Zinc finger and BTB domain-containing protein 14 (448 aa).

The 67-residue stretch at 36–102 folds into the BTB domain; that stretch reads CDIAIVVEDV…MYTAKISVKK (67 aa). The Nuclear localization signal signature appears at 50-66; sequence HRCVLAACSTYFKKLFK. A disordered region spans residues 130–193; the sequence is VSSPEENTQS…QEDGKSPTTT (64 aa). Acidic residues predominate over residues 156-167; sequence DTQDDEVEEIGD. 5 consecutive C2H2-type zinc fingers follow at residues 275–302, 303–330, 331–358, 359–386, and 387–415; these read IVCQ…ADRP, FVCE…GYKP, YSCE…NERP, FACH…GEKP, and FVCG…ERKQ. Over residues 404–415 the composition is skewed to basic and acidic residues; it reads RHENNMHSERKQ. A disordered region spans residues 404 to 425; it reads RHENNMHSERKQVTTANSIQSE. Residues 416-425 are compositionally biased toward polar residues; it reads VTTANSIQSE.

The protein belongs to the krueppel C2H2-type zinc-finger protein family. As to quaternary structure, interacts with ZBTB21.

It is found in the nucleus. Its function is as follows. Transcriptional activator of the dopamine transporter (DAT), binding it's promoter at the consensus sequence 5'-CCTGCACAGTTCACGGA-3'. Binds to 5'-d(GCC)(n)-3' trinucleotide repeats in promoter regions and acts as a repressor of the FMR1 gene. Transcriptional repressor of MYC and thymidine kinase promoters. The protein is Zinc finger and BTB domain-containing protein 14 (ZBTB14) of Gallus gallus (Chicken).